Reading from the N-terminus, the 227-residue chain is Cytidylate kinase (227 aa).

12 to 20 (GPSGAGKGT) contacts ATP.

It belongs to the cytidylate kinase family. Type 1 subfamily.

It localises to the cytoplasm. It catalyses the reaction CMP + ATP = CDP + ADP. The enzyme catalyses dCMP + ATP = dCDP + ADP. The chain is Cytidylate kinase from Salmonella typhimurium (strain LT2 / SGSC1412 / ATCC 700720).